Here is a 201-residue protein sequence, read N- to C-terminus: Ciliary microtubule inner protein 2C (201 aa).

This sequence belongs to the CIMIP2 family. In terms of assembly, microtubule inner protein component of sperm flagellar doublet microtubules. Expressed in airway epithelial cells.

Its subcellular location is the cytoplasm. The protein localises to the cytoskeleton. It localises to the cilium axoneme. It is found in the flagellum axoneme. Its function is as follows. Microtubule inner protein (MIP) part of the dynein-decorated doublet microtubules (DMTs) in cilia axoneme, which is required for motile cilia beating. Binds to the intra-tubulin interfaces. The protein is Ciliary microtubule inner protein 2C of Homo sapiens (Human).